A 2005-amino-acid chain; its full sequence is Chitin synthase 8 (2005 aa).

The Myosin motor domain occupies 5 to 773; it reads DEVAKLSQLT…AFRELEDELR (769 aa). 108-115 contributes to the ATP binding site; sequence GDTSSGKS. 4 N-linked (GlcNAc...) asparagine glycosylation sites follow: Asn164, Asn364, Asn390, and Asn546. The segment at 585–631 is disordered; sequence QSVKPMRAPSTRRPNRGNTIKRTNTIKKADDDDSDEDAADAADASTS. Positions 615-624 are enriched in acidic residues; sequence DDDSDEDAAD. The tract at residues 647–669 is actin-binding; it reads LDLLLETLEDTKTWFTLCLRPND. The next 2 helical transmembrane spans lie at 929–949 and 965–985; these read KWVALTWAITFWIPSFILSRF and LAINLIIWFICACAVFVIVVL. The N-linked (GlcNAc...) asparagine glycan is linked to Asn1076. Helical transmembrane passes span 1232–1252, 1604–1624, and 1626–1646; these read ILLALSLFMVAILGFKFLAAL, LIFTPGLCGFCLFSMRFIVFI, and LLSTIIAPVTVCYIVYLIVLV. Asn1650 carries N-linked (GlcNAc...) asparagine glycosylation. The next 2 helical transmembrane spans lie at 1653–1673 and 1680–1700; these read VPLTAIIMLAAIYGCQAVIFL and MIGWMIVYIIGIPIWSLFLPL. Asn1770 and Asn1794 each carry an N-linked (GlcNAc...) asparagine glycan. The disordered stretch occupies residues 1796–1821; sequence SFGHSPSPSYGGTPSQFGAFAPGPGS. The segment covering 1797-1811 has biased composition (polar residues); the sequence is FGHSPSPSYGGTPSQ. Residue Asn1882 is glycosylated (N-linked (GlcNAc...) asparagine). Positions 1912–1950 are disordered; that stretch reads FATAEQQQQQQQQQQAAGLSGSGGSKSPPREAVAGGLPS. Residues 1917-1930 show a composition bias toward low complexity; it reads QQQQQQQQQQAAGL. One can recognise a DEK-C domain in the interval 1948-2003; the sequence is LPSDSQIKLDIRSLIAESDLTTITKKQLRAKLEQKYATSIESKKAFINSEIENVLS.

In the N-terminal section; belongs to the TRAFAC class myosin-kinesin ATPase superfamily. Myosin family. It in the C-terminal section; belongs to the chitin synthase family. Class V subfamily.

It is found in the cell membrane. The protein localises to the cytoplasmic vesicle membrane. It localises to the cell tip. It catalyses the reaction [(1-&gt;4)-N-acetyl-beta-D-glucosaminyl](n) + UDP-N-acetyl-alpha-D-glucosamine = [(1-&gt;4)-N-acetyl-beta-D-glucosaminyl](n+1) + UDP + H(+). Its function is as follows. Polymerizes chitin, a structural polymer of the cell wall and septum, by transferring the sugar moiety of UDP-GlcNAc to the non-reducing end of the growing chitin polymer. Involved in mating tube and dikaryotic hyphae formation and required for the formation of invading hyphae during plant infection. In Mycosarcoma maydis (Corn smut fungus), this protein is Chitin synthase 8.